Consider the following 513-residue polypeptide: MQLNSTEISELIKQRIAQFNVVSEAHNEGTIVSVSDGVIRIHGLADCMQGEMISLPGNRYAIALNLERDSVGAVVMGPYADLAEGMKVKCTGRILEVPVGRGLLGRVVNTLGAPIDGKGPLDHDGFSAVEAIAPGVIERQSVDQPVQTGYKAVDSMIPIGRGQRELIIGDRQTGKTALAIDAIINQRDSGIKCIYVAIGQKASTISNVVRKLEEHGALANTIVVVATASESAALQYLAPYAGCAMGEYFRDRGEDALIIYDDLSKQAVAYRQISLLLRRPPGREAFPGDVFYLHSRLLERAARVNAEYVEAFTKGEVKGKNGSLTALPIIETQAGDVSAFVPTNVISITDGQIFLETNLFNAGIRPAVNPGISVSRVGGAAQTKIMKKLSGGIRTALAQYRELAAFSQFASDLDDATRKQLDHGQKVTELLKQKQYAPMSVAQQSLVLFAAERGYLADVELSKIGSFEAALLAYVDRDHAPLMQEINQTGGYNDEIEGKLKGILDSFKATQSW.

169–176 (GDRQTGKT) contacts ATP.

The protein belongs to the ATPase alpha/beta chains family. In terms of assembly, F-type ATPases have 2 components, CF(1) - the catalytic core - and CF(0) - the membrane proton channel. CF(1) has five subunits: alpha(3), beta(3), gamma(1), delta(1), epsilon(1). CF(0) has three main subunits: a(1), b(2) and c(9-12). The alpha and beta chains form an alternating ring which encloses part of the gamma chain. CF(1) is attached to CF(0) by a central stalk formed by the gamma and epsilon chains, while a peripheral stalk is formed by the delta and b chains.

The protein resides in the cell inner membrane. The catalysed reaction is ATP + H2O + 4 H(+)(in) = ADP + phosphate + 5 H(+)(out). Its function is as follows. Produces ATP from ADP in the presence of a proton gradient across the membrane. The alpha chain is a regulatory subunit. This chain is ATP synthase subunit alpha, found in Shigella boydii serotype 18 (strain CDC 3083-94 / BS512).